The sequence spans 465 residues: Adenosine 3'-phospho 5'-phosphosulfate transporter 1 (465 aa).

10 helical membrane passes run 13-33, 61-81, 142-162, 185-205, 270-290, 299-319, 339-359, 370-390, 391-407, and 424-444; these read LVIC…SDLL, FLKL…GFLI, AVQL…WGVL, QFLV…YLQW, SYEY…MSGS, VTTL…SFTA, GVNL…GGFM, KFVF…LFIY, HTID…IMTL, and ISLL…LRVY.

Belongs to the nucleotide-sugar transporter family. SLC35B subfamily. In terms of tissue distribution, expressed throughout embryogenesis. During oogenesis, it is expressed strongly in the nurse cells of the germline. Maternally expressed at the syncytial blastoderm stage. Zygotically expressed, from after germ-band elongation in the invaginating salivary gland placodes. Remains expressed predominantly in this tissue throughout embryogenesis, but low-level expression may also be present throughout the embryo.

Its subcellular location is the golgi apparatus membrane. In terms of biological role, mediates the transport of adenosine 3'-phospho 5'-phosphosulfate (PAPS), from cytosol into Golgi. PAPS is a universal sulfuryl donor for sulfation events that take place in the Golgi. Required for the dorsoventral patterning, suggesting that it mediates the transport of the sulfate donor required for the sulfotransferase activity of pip (pipe). The sequence is that of Adenosine 3'-phospho 5'-phosphosulfate transporter 1 (sll) from Drosophila melanogaster (Fruit fly).